The primary structure comprises 117 residues: Multidrug resistance protein EbrB (117 aa).

Helical transmembrane passes span 3 to 23 (GLLYLALAIVSEVFGSTMLKL), 31 to 51 (WPIAGVIVGFLSAFTFLSFSL), 59 to 79 (AYATWSGVGTALTAIVGFLLF), and 81 to 101 (ETISLKGVFGLTLVIAGVVVL).

Belongs to the drug/metabolite transporter (DMT) superfamily. Small multidrug resistance (SMR) (TC 2.A.7.1) family. EbrA/EbrB subfamily. In terms of assembly, the efflux pump is composed of EbrA and EbrB.

Its subcellular location is the cell membrane. Functionally, part of a multidrug efflux pump. Confers resistance to cationic lipophilic dyes such as ethidium bromide, acriflavine, pyronine Y and safranin O. The efflux is probably coupled to an influx of protons. The protein is Multidrug resistance protein EbrB (ebrB) of Bacillus subtilis (strain 168).